The chain runs to 110 residues: MFGKGGIGNLMKQAQQMQEKMQQMQEEVAKLEVTGESGAGLVKVTINGAHNCRRVEIDPSLLVEEDKEMLEDLIAAAFNDAARRIDETQKEKMASVSSGMQLPPGFKMPF.

It belongs to the YbaB/EbfC family. As to quaternary structure, homodimer.

It is found in the cytoplasm. The protein localises to the nucleoid. Binds to DNA and alters its conformation. May be involved in regulation of gene expression, nucleoid organization and DNA protection. This Yersinia enterocolitica serotype O:8 / biotype 1B (strain NCTC 13174 / 8081) protein is Nucleoid-associated protein YE3092.